The following is a 416-amino-acid chain: Serine hydroxymethyltransferase (416 aa).

Residues L121 and 125–127 (GHL) contribute to the (6S)-5,6,7,8-tetrahydrofolate site. K230 is modified (N6-(pyridoxal phosphate)lysine). 355–357 (SPF) is a (6S)-5,6,7,8-tetrahydrofolate binding site.

Belongs to the SHMT family. In terms of assembly, homodimer. It depends on pyridoxal 5'-phosphate as a cofactor.

It is found in the cytoplasm. It catalyses the reaction (6R)-5,10-methylene-5,6,7,8-tetrahydrofolate + glycine + H2O = (6S)-5,6,7,8-tetrahydrofolate + L-serine. The protein operates within one-carbon metabolism; tetrahydrofolate interconversion. Its pathway is amino-acid biosynthesis; glycine biosynthesis; glycine from L-serine: step 1/1. Functionally, catalyzes the reversible interconversion of serine and glycine with tetrahydrofolate (THF) serving as the one-carbon carrier. This reaction serves as the major source of one-carbon groups required for the biosynthesis of purines, thymidylate, methionine, and other important biomolecules. Also exhibits THF-independent aldolase activity toward beta-hydroxyamino acids, producing glycine and aldehydes, via a retro-aldol mechanism. This chain is Serine hydroxymethyltransferase, found in Streptococcus thermophilus (strain CNRZ 1066).